We begin with the raw amino-acid sequence, 575 residues long: Amino-acid acetyltransferase, mitochondrial (575 aa).

The transit peptide at 1 to 35 (MSKLRNLNRQFISNLKTHETVTNAKRNLILSILKS) directs the protein to the mitochondrion. The region spanning 398 to 557 (FTLNNLVQDG…QGIPGGVNIH (160 aa)) is the N-acetyltransferase domain.

It belongs to the acetyltransferase family.

The protein resides in the mitochondrion. It carries out the reaction L-glutamate + acetyl-CoA = N-acetyl-L-glutamate + CoA + H(+). It participates in amino-acid biosynthesis; L-arginine biosynthesis; N(2)-acetyl-L-ornithine from L-glutamate: step 1/4. In terms of biological role, N-acetylglutamate synthase involved in arginine biosynthesis. The sequence is that of Amino-acid acetyltransferase, mitochondrial (ARG2) from Debaryomyces hansenii (strain ATCC 36239 / CBS 767 / BCRC 21394 / JCM 1990 / NBRC 0083 / IGC 2968) (Yeast).